A 227-amino-acid polypeptide reads, in one-letter code: Cytochrome c oxidase subunit 2 (227 aa).

Topologically, residues M1–S14 are mitochondrial intermembrane. The helical transmembrane segment at P15–M45 threads the bilayer. The Mitochondrial matrix portion of the chain corresponds to L46 to Q59. Residues E60–M87 traverse the membrane as a helical segment. The Mitochondrial intermembrane portion of the chain corresponds to D88 to V227. Residues H161, C196, E198, C200, H204, and M207 each contribute to the Cu cation site. E198 contacts Mg(2+).

Belongs to the cytochrome c oxidase subunit 2 family. Component of the cytochrome c oxidase (complex IV, CIV), a multisubunit enzyme composed of 14 subunits. The complex is composed of a catalytic core of 3 subunits MT-CO1, MT-CO2 and MT-CO3, encoded in the mitochondrial DNA, and 11 supernumerary subunits COX4I, COX5A, COX5B, COX6A, COX6B, COX6C, COX7A, COX7B, COX7C, COX8 and NDUFA4, which are encoded in the nuclear genome. The complex exists as a monomer or a dimer and forms supercomplexes (SCs) in the inner mitochondrial membrane with NADH-ubiquinone oxidoreductase (complex I, CI) and ubiquinol-cytochrome c oxidoreductase (cytochrome b-c1 complex, complex III, CIII), resulting in different assemblies (supercomplex SCI(1)III(2)IV(1) and megacomplex MCI(2)III(2)IV(2)). Found in a complex with TMEM177, COA6, COX18, COX20, SCO1 and SCO2. Interacts with TMEM177 in a COX20-dependent manner. Interacts with COX20. Interacts with COX16. Cu cation serves as cofactor.

The protein resides in the mitochondrion inner membrane. The catalysed reaction is 4 Fe(II)-[cytochrome c] + O2 + 8 H(+)(in) = 4 Fe(III)-[cytochrome c] + 2 H2O + 4 H(+)(out). Functionally, component of the cytochrome c oxidase, the last enzyme in the mitochondrial electron transport chain which drives oxidative phosphorylation. The respiratory chain contains 3 multisubunit complexes succinate dehydrogenase (complex II, CII), ubiquinol-cytochrome c oxidoreductase (cytochrome b-c1 complex, complex III, CIII) and cytochrome c oxidase (complex IV, CIV), that cooperate to transfer electrons derived from NADH and succinate to molecular oxygen, creating an electrochemical gradient over the inner membrane that drives transmembrane transport and the ATP synthase. Cytochrome c oxidase is the component of the respiratory chain that catalyzes the reduction of oxygen to water. Electrons originating from reduced cytochrome c in the intermembrane space (IMS) are transferred via the dinuclear copper A center (CU(A)) of subunit 2 and heme A of subunit 1 to the active site in subunit 1, a binuclear center (BNC) formed by heme A3 and copper B (CU(B)). The BNC reduces molecular oxygen to 2 water molecules using 4 electrons from cytochrome c in the IMS and 4 protons from the mitochondrial matrix. This chain is Cytochrome c oxidase subunit 2 (MT-CO2), found in Vulpes corsac (Corsac fox).